We begin with the raw amino-acid sequence, 275 residues long: tRNA (guanine-N(7)-)-methyltransferase (275 aa).

Positions 1–73 are disordered; the sequence is MRHHGRMHAR…GGQQDTWERL (73 aa). Basic residues predominate over residues 46 to 59; it reads AHRHRRVTSFRSRR. S-adenosyl-L-methionine is bound by residues Glu107, Glu132, Asp159, and Asp182. Asp182 is a catalytic residue. Substrate-binding positions include Lys186, Asp218, and 254-257; that span reads TKYE.

Belongs to the class I-like SAM-binding methyltransferase superfamily. TrmB family.

It catalyses the reaction guanosine(46) in tRNA + S-adenosyl-L-methionine = N(7)-methylguanosine(46) in tRNA + S-adenosyl-L-homocysteine. It participates in tRNA modification; N(7)-methylguanine-tRNA biosynthesis. Catalyzes the formation of N(7)-methylguanine at position 46 (m7G46) in tRNA. This chain is tRNA (guanine-N(7)-)-methyltransferase, found in Mycobacterium sp. (strain KMS).